A 628-amino-acid chain; its full sequence is Protein SDS23 (628 aa).

Positions 1–126 are disordered; the sequence is MVNPPQPRQM…NKSSSQSIAP (126 aa). The segment covering 15 to 24 has biased composition (polar residues); the sequence is RLSTSTSSGP. 2 stretches are compositionally biased toward low complexity: residues 40–71 and 109–123; these read QLQHQPSSASTSSTTSTATTGGSISATAPGST and SRHASTSSNKSSSQS. 2 CBS domains span residues 258–319 and 334–392; these read LHPK…RFPS and GSSN…SHLL. The interval 551–609 is disordered; the sequence is GRRTDPQAARNQRRRSSTSTTRSSIDSALSAEGILPSGSAIIGSSNAANTGRRGSVEVS. Residues 587-599 show a composition bias toward low complexity; sequence SGSAIIGSSNAAN.

This sequence belongs to the SDS23 family.

It localises to the cytoplasm. The protein localises to the nucleus. Involved in DNA replication and cell separation. The protein is Protein SDS23 (SDS24) of Candida albicans (strain SC5314 / ATCC MYA-2876) (Yeast).